Reading from the N-terminus, the 257-residue chain is Imidazole glycerol phosphate synthase subunit HisF (257 aa).

Active-site residues include Asp-12 and Asp-131.

Belongs to the HisA/HisF family. As to quaternary structure, heterodimer of HisH and HisF.

The protein localises to the cytoplasm. It carries out the reaction 5-[(5-phospho-1-deoxy-D-ribulos-1-ylimino)methylamino]-1-(5-phospho-beta-D-ribosyl)imidazole-4-carboxamide + L-glutamine = D-erythro-1-(imidazol-4-yl)glycerol 3-phosphate + 5-amino-1-(5-phospho-beta-D-ribosyl)imidazole-4-carboxamide + L-glutamate + H(+). The protein operates within amino-acid biosynthesis; L-histidine biosynthesis; L-histidine from 5-phospho-alpha-D-ribose 1-diphosphate: step 5/9. In terms of biological role, IGPS catalyzes the conversion of PRFAR and glutamine to IGP, AICAR and glutamate. The HisF subunit catalyzes the cyclization activity that produces IGP and AICAR from PRFAR using the ammonia provided by the HisH subunit. The sequence is that of Imidazole glycerol phosphate synthase subunit HisF from Teredinibacter turnerae (strain ATCC 39867 / T7901).